The chain runs to 309 residues: Glutaminase (309 aa).

Positions 64, 114, 160, 167, 191, 243, and 261 each coordinate substrate.

This sequence belongs to the glutaminase family. As to quaternary structure, homotetramer.

The enzyme catalyses L-glutamine + H2O = L-glutamate + NH4(+). The chain is Glutaminase from Methylorubrum extorquens (strain CM4 / NCIMB 13688) (Methylobacterium extorquens).